The chain runs to 396 residues: Elongation factor Tu (396 aa).

The 197-residue stretch at 10-206 (KPHVNVGTIG…ALDSYIPEPE (197 aa)) folds into the tr-type G domain. The G1 stretch occupies residues 19-26 (GHVDHGKT). 19-26 (GHVDHGKT) provides a ligand contact to GTP. Residue Thr-26 participates in Mg(2+) binding. A G2 region spans residues 60–64 (GITIN). The G3 stretch occupies residues 81–84 (DCPG). GTP is bound by residues 81–85 (DCPGH) and 136–139 (NKCD). The interval 136–139 (NKCD) is G4. The segment at 174 to 176 (SAL) is G5.

The protein belongs to the TRAFAC class translation factor GTPase superfamily. Classic translation factor GTPase family. EF-Tu/EF-1A subfamily. As to quaternary structure, monomer.

The protein resides in the cytoplasm. It catalyses the reaction GTP + H2O = GDP + phosphate + H(+). GTP hydrolase that promotes the GTP-dependent binding of aminoacyl-tRNA to the A-site of ribosomes during protein biosynthesis. This chain is Elongation factor Tu, found in Acinetobacter baumannii (strain ATCC 17978 / DSM 105126 / CIP 53.77 / LMG 1025 / NCDC KC755 / 5377).